A 127-amino-acid chain; its full sequence is Protein ApaG (127 aa).

Positions 3-127 constitute an ApaG domain; sequence DDPRYRVEVE…FVLSVPRTLH (125 aa).

The sequence is that of Protein ApaG from Xanthomonas campestris pv. campestris (strain 8004).